We begin with the raw amino-acid sequence, 101 residues long: uncharacterized protein (101 aa).

The N-terminal stretch at 1-25 is a signal peptide; sequence MISIPFRSTMSRTLVFIILPTVLSC.

This is an uncharacterized protein from Saccharomyces cerevisiae (strain ATCC 204508 / S288c) (Baker's yeast).